Reading from the N-terminus, the 214-residue chain is Small ribosomal subunit protein uS4c (214 aa).

Basic residues-rich tracts occupy residues 1-14 and 36-46; these read MSRYRGPRVKKIKR and LSRPKPKKKSQ. Residues 1-46 are disordered; the sequence is MSRYRGPRVKKIKRLGSLPGLTTKKPPIVVRDPRKLSRPKPKKKSQ. An S4 RNA-binding domain is found at 92–153; sequence MRLDNTLFRL…KEKSKALIQN (62 aa).

It belongs to the universal ribosomal protein uS4 family. Part of the 30S ribosomal subunit. Contacts protein S5. The interaction surface between S4 and S5 is involved in control of translational fidelity.

The protein localises to the plastid. Its subcellular location is the chloroplast. One of the primary rRNA binding proteins, it binds directly to 16S rRNA where it nucleates assembly of the body of the 30S subunit. Functionally, with S5 and S12 plays an important role in translational accuracy. In Pelargonium hortorum (Common geranium), this protein is Small ribosomal subunit protein uS4c (rps4).